A 344-amino-acid chain; its full sequence is GTPase Obg (344 aa).

An Obg domain is found at 1 to 159; it reads MKFLDEAKVY…MWLILRLKLI (159 aa). Residues 160–327 form the OBG-type G domain; that stretch reads ADAGLVGLPN…ALRAIQAQLD (168 aa). Residues 166 to 173, 191 to 195, 212 to 215, 279 to 282, and 308 to 310 contribute to the GTP site; these read GLPNAGKS, FTTLH, DIPG, SKAD, and SAA. Residues Ser173 and Thr193 each contribute to the Mg(2+) site.

This sequence belongs to the TRAFAC class OBG-HflX-like GTPase superfamily. OBG GTPase family. Monomer. It depends on Mg(2+) as a cofactor.

The protein resides in the cytoplasm. Functionally, an essential GTPase which binds GTP, GDP and possibly (p)ppGpp with moderate affinity, with high nucleotide exchange rates and a fairly low GTP hydrolysis rate. Plays a role in control of the cell cycle, stress response, ribosome biogenesis and in those bacteria that undergo differentiation, in morphogenesis control. The sequence is that of GTPase Obg from Methylorubrum populi (strain ATCC BAA-705 / NCIMB 13946 / BJ001) (Methylobacterium populi).